Consider the following 549-residue polypeptide: Hydroxylamine reductase (549 aa).

[4Fe-4S] cluster contacts are provided by Cys5, Cys8, Cys17, and Cys23. Residues His244, Glu268, Cys312, Cys403, Cys431, Cys456, Glu491, and Lys493 each contribute to the hybrid [4Fe-2O-2S] cluster site. At Cys403 the chain carries Cysteine persulfide.

Belongs to the HCP family. Requires [4Fe-4S] cluster as cofactor. Hybrid [4Fe-2O-2S] cluster serves as cofactor.

The protein localises to the cytoplasm. The enzyme catalyses A + NH4(+) + H2O = hydroxylamine + AH2 + H(+). Its function is as follows. Catalyzes the reduction of hydroxylamine to form NH(3) and H(2)O. The chain is Hydroxylamine reductase from Caldanaerobacter subterraneus subsp. tengcongensis (strain DSM 15242 / JCM 11007 / NBRC 100824 / MB4) (Thermoanaerobacter tengcongensis).